The chain runs to 468 residues: Bifunctional protein HldE (468 aa).

A ribokinase region spans residues methionine 1 to glutamate 315. ATP is bound at residue asparagine 192 to glutamate 195. Residue aspartate 260 is part of the active site. Residues phenylalanine 340–lysine 468 form a cytidylyltransferase region.

The protein in the N-terminal section; belongs to the carbohydrate kinase PfkB family. This sequence in the C-terminal section; belongs to the cytidylyltransferase family. Homodimer.

The catalysed reaction is D-glycero-beta-D-manno-heptose 7-phosphate + ATP = D-glycero-beta-D-manno-heptose 1,7-bisphosphate + ADP + H(+). It catalyses the reaction D-glycero-beta-D-manno-heptose 1-phosphate + ATP + H(+) = ADP-D-glycero-beta-D-manno-heptose + diphosphate. The protein operates within nucleotide-sugar biosynthesis; ADP-L-glycero-beta-D-manno-heptose biosynthesis; ADP-L-glycero-beta-D-manno-heptose from D-glycero-beta-D-manno-heptose 7-phosphate: step 1/4. It functions in the pathway nucleotide-sugar biosynthesis; ADP-L-glycero-beta-D-manno-heptose biosynthesis; ADP-L-glycero-beta-D-manno-heptose from D-glycero-beta-D-manno-heptose 7-phosphate: step 3/4. Its function is as follows. Catalyzes the phosphorylation of D-glycero-D-manno-heptose 7-phosphate at the C-1 position to selectively form D-glycero-beta-D-manno-heptose-1,7-bisphosphate. Functionally, catalyzes the ADP transfer from ATP to D-glycero-beta-D-manno-heptose 1-phosphate, yielding ADP-D-glycero-beta-D-manno-heptose. This is Bifunctional protein HldE from Campylobacter curvus (strain 525.92).